Consider the following 345-residue polypeptide: tRNA-specific 2-thiouridylase MnmA 1 (345 aa).

ATP contacts are provided by residues Gly-9 to Ser-16 and Leu-35. Cys-96 (nucleophile) is an active-site residue. Cysteines 96 and 191 form a disulfide. Gly-120 contacts ATP. An interaction with tRNA region spans residues Lys-138–Gln-140. Cys-191 serves as the catalytic Cysteine persulfide intermediate. The interaction with tRNA stretch occupies residues Arg-293 to Tyr-294.

Belongs to the MnmA/TRMU family.

The protein resides in the cytoplasm. It carries out the reaction S-sulfanyl-L-cysteinyl-[protein] + uridine(34) in tRNA + AH2 + ATP = 2-thiouridine(34) in tRNA + L-cysteinyl-[protein] + A + AMP + diphosphate + H(+). Functionally, catalyzes the 2-thiolation of uridine at the wobble position (U34) of tRNA, leading to the formation of s(2)U34. The protein is tRNA-specific 2-thiouridylase MnmA 1 of Aliarcobacter butzleri (strain RM4018) (Arcobacter butzleri).